The sequence spans 701 residues: MARKTPISLYRNIGISAHIDAGKTTTTERILFYTGLTHKLGEVHDGAATTDYMEQEQERGITITSAAVTSYWSGMAKQFPEHRFNIIDTPGHVDFTVEVERSMRVLDGAVMVYCAVGGVQPQSETVWRQANKYQVPRLAFVNKMDRQGANFFRVVEQMKTRLRANPVPIVIPVGAEDSFTGVVDLLKMKSIIWNEADKGTTFTYGDIPAELVETAEEWRQNMIEAAAEASEELMDKYLGGEDLAEEEIVGALRQRTLAGEIQPMLCGSAFKNKGVQRMLDAVVELLPAPTDIPPVQGVNPNTEEADSRQASDEEKFSALAFKMLNDKYVGQLTFIRVYSGVVKSGDTVLNSVKGTRERIGRLVQMTAADRTEIEEVRAGDIAAAIGLKDVTTGETLCAESAPIILERMEFPEPVIHIAVEPKTKADQEKMGIALNRLAKEDPSFRVRTDEESGQTIISGMGELHLEIIVDRMKREFGVEANIGAPQVAYRETIRKAVKAEYKHAKQSGGKGQYGHVVIEMEPMEPGGEGYEFIDEIKGGVIPREFIPSVDKGIRDTLPNGIVAGYPVVDVRIRLVFGSYHDVDSSQLAFELAASQAFKEGMRQASPALLEPIMAVEVETPEEYMGDVMGDLNRRRGVVLGMDDDGIGGKKVRAEVPLAEMFGYSTDLRSATQGRATYSMEFKKYSEAPAHIAAAVTEARKG.

The tr-type G domain occupies 8-290; the sequence is SLYRNIGISA…AVVELLPAPT (283 aa). GTP-binding positions include 17–24, 88–92, and 142–145; these read AHIDAGKT, DTPGH, and NKMD.

This sequence belongs to the TRAFAC class translation factor GTPase superfamily. Classic translation factor GTPase family. EF-G/EF-2 subfamily.

Its subcellular location is the cytoplasm. Its function is as follows. Catalyzes the GTP-dependent ribosomal translocation step during translation elongation. During this step, the ribosome changes from the pre-translocational (PRE) to the post-translocational (POST) state as the newly formed A-site-bound peptidyl-tRNA and P-site-bound deacylated tRNA move to the P and E sites, respectively. Catalyzes the coordinated movement of the two tRNA molecules, the mRNA and conformational changes in the ribosome. The polypeptide is Elongation factor G (Neisseria gonorrhoeae (strain ATCC 700825 / FA 1090)).